A 432-amino-acid polypeptide reads, in one-letter code: Competence protein ComFA (432 aa).

Cys-40, Cys-43, Cys-60, and Cys-63 together coordinate Zn(2+). The Helicase ATP-binding domain occupies 107 to 257 (LQAVDKQKPT…RLGELKRLNL (151 aa)). 120 to 127 (AVTGAGKT) contributes to the ATP binding site. Positions 205–208 (DEVD) match the DEAD box motif. Positions 289–432 (KLKSYIEKQR…IQMMNKEAGL (144 aa)) constitute a Helicase C-terminal domain.

Belongs to the DEAD box helicase family. As to quaternary structure, monomer and dimer in solution. Interacts with DprA and ComFC; ComFA-ComFC form rings about 150 Angstroms in diameter with apparent 6-fold symmetry. Zn(2+) is required as a cofactor.

Its subcellular location is the cytoplasm. In terms of biological role, involved in transformation (genetic competence for DNA uptake). DNA uptake is energy dependent, this protein may provide the driving force for DNA uptake. Does not have helicase activity, translocates on single-stranded (ss)DNA in a 5'-3' direction in an ATP-dependent manner, but does not unwind double-stranded (ds)DNA (tested with 5'- and 3'-overhang dsDNA). ATP hydrolysis causes the release of ssDNA from ComFA. A ssDNA-stimulated ATPase; dsDNA does not stimulate ATPase. ATP hydrolysis causes the release of ssDNA from ComFA. ComFC has no effect on ATPase activity. Binds ssDNA but only very poorly to dsDNA in the absence of ATP. Binding to ssDNA does not require free DNA ends. This is Competence protein ComFA from Streptococcus pneumoniae (strain ATCC BAA-255 / R6).